The chain runs to 395 residues: Phosphopentomutase (395 aa).

Mn(2+) contacts are provided by Asp12, Asp289, His294, Asp330, His331, and His342.

Belongs to the phosphopentomutase family. Requires Mn(2+) as cofactor.

Its subcellular location is the cytoplasm. The enzyme catalyses 2-deoxy-alpha-D-ribose 1-phosphate = 2-deoxy-D-ribose 5-phosphate. The catalysed reaction is alpha-D-ribose 1-phosphate = D-ribose 5-phosphate. Its pathway is carbohydrate degradation; 2-deoxy-D-ribose 1-phosphate degradation; D-glyceraldehyde 3-phosphate and acetaldehyde from 2-deoxy-alpha-D-ribose 1-phosphate: step 1/2. In terms of biological role, isomerase that catalyzes the conversion of deoxy-ribose 1-phosphate (dRib-1-P) and ribose 1-phosphate (Rib-1-P) to deoxy-ribose 5-phosphate (dRib-5-P) and ribose 5-phosphate (Rib-5-P), respectively. This chain is Phosphopentomutase, found in Levilactobacillus brevis (strain ATCC 367 / BCRC 12310 / CIP 105137 / JCM 1170 / LMG 11437 / NCIMB 947 / NCTC 947) (Lactobacillus brevis).